The chain runs to 587 residues: Bifunctional lycopene cyclase/phytoene synthase (587 aa).

The tract at residues 1 to 242 is lycopene beta-cyclase; that stretch reads MGYDYALVHV…IVFGIAAFDK (242 aa). Transmembrane regions (helical) follow at residues 8 to 28, 35 to 55, 77 to 97, 120 to 140, 150 to 170, 172 to 192, and 220 to 240; these read VHVKYTIPLAALLTVFSYPVF, RTLFIVTIAFVATIPWDSYLI, AEELFFFIIQTYITAQLYIIL, GKLVGQLALSGSVLLGTWLIA, LILVWACTFALFTWTITAHFL, ALPLACTALPILLPTVYLWIV, and IEEATFFLVTNMLIVFGIAAF. A phytoene synthase region spans residues 249-587; sequence AFPEKFDKPA…WVAWSTLMAA (339 aa).

The protein in the N-terminal section; belongs to the lycopene beta-cyclase family. This sequence in the C-terminal section; belongs to the phytoene/squalene synthase family.

The protein resides in the membrane. It catalyses the reaction all-trans-lycopene = gamma-carotene. The enzyme catalyses gamma-carotene = all-trans-beta-carotene. It carries out the reaction 2 (2E,6E,10E)-geranylgeranyl diphosphate = 15-cis-phytoene + 2 diphosphate. It functions in the pathway carotenoid biosynthesis; beta-carotene biosynthesis. Its pathway is carotenoid biosynthesis; phytoene biosynthesis; all-trans-phytoene from geranylgeranyl diphosphate: step 1/1. Its function is as follows. Bifunctional enzyme that catalyzes the reactions from geranylgeranyl diphosphate to phytoene (phytoene synthase) and lycopene to beta-carotene via the intermediate gamma-carotene (lycopene cyclase). The protein is Bifunctional lycopene cyclase/phytoene synthase of Colletotrichum graminicola (strain M1.001 / M2 / FGSC 10212) (Maize anthracnose fungus).